Here is a 378-residue protein sequence, read N- to C-terminus: Erythronate-4-phosphate dehydrogenase (378 aa).

The substrate site is built by Ser-45 and Thr-66. Positions 146 and 175 each coordinate NAD(+). Arg-208 is a catalytic residue. Asp-232 is an NAD(+) binding site. Residue Glu-237 is part of the active site. His-254 serves as the catalytic Proton donor. Residue Gly-257 coordinates NAD(+). Tyr-258 is a substrate binding site.

It belongs to the D-isomer specific 2-hydroxyacid dehydrogenase family. PdxB subfamily. As to quaternary structure, homodimer.

It localises to the cytoplasm. It carries out the reaction 4-phospho-D-erythronate + NAD(+) = (R)-3-hydroxy-2-oxo-4-phosphooxybutanoate + NADH + H(+). Its pathway is cofactor biosynthesis; pyridoxine 5'-phosphate biosynthesis; pyridoxine 5'-phosphate from D-erythrose 4-phosphate: step 2/5. Its function is as follows. Catalyzes the oxidation of erythronate-4-phosphate to 3-hydroxy-2-oxo-4-phosphonooxybutanoate. The chain is Erythronate-4-phosphate dehydrogenase from Pectobacterium carotovorum subsp. carotovorum (strain PC1).